The primary structure comprises 450 residues: Glucose-6-phosphate isomerase (450 aa).

The Proton donor role is filled by Glu-291. Catalysis depends on residues His-312 and Lys-426.

This sequence belongs to the GPI family.

It localises to the cytoplasm. It catalyses the reaction alpha-D-glucose 6-phosphate = beta-D-fructose 6-phosphate. It participates in carbohydrate biosynthesis; gluconeogenesis. Its pathway is carbohydrate degradation; glycolysis; D-glyceraldehyde 3-phosphate and glycerone phosphate from D-glucose: step 2/4. Its function is as follows. Catalyzes the reversible isomerization of glucose-6-phosphate to fructose-6-phosphate. This Clostridium perfringens (strain SM101 / Type A) protein is Glucose-6-phosphate isomerase.